The following is a 97-amino-acid chain: UPF0729 protein GD16342 (97 aa).

Residues 64–97 are disordered; the sequence is KPEKASVGPAEESQNPPLNAIAAETEVDESKKEI. A Phosphoserine modification is found at serine 69.

It belongs to the UPF0729 family.

The polypeptide is UPF0729 protein GD16342 (Drosophila simulans (Fruit fly)).